Here is a 503-residue protein sequence, read N- to C-terminus: Probable cytosol aminopeptidase (503 aa).

Residues Lys274 and Asp279 each contribute to the Mn(2+) site. The active site involves Lys286. Positions 297, 356, and 358 each coordinate Mn(2+). Arg360 is a catalytic residue.

Belongs to the peptidase M17 family. It depends on Mn(2+) as a cofactor.

Its subcellular location is the cytoplasm. It carries out the reaction Release of an N-terminal amino acid, Xaa-|-Yaa-, in which Xaa is preferably Leu, but may be other amino acids including Pro although not Arg or Lys, and Yaa may be Pro. Amino acid amides and methyl esters are also readily hydrolyzed, but rates on arylamides are exceedingly low.. The enzyme catalyses Release of an N-terminal amino acid, preferentially leucine, but not glutamic or aspartic acids.. Its function is as follows. Presumably involved in the processing and regular turnover of intracellular proteins. Catalyzes the removal of unsubstituted N-terminal amino acids from various peptides. This chain is Probable cytosol aminopeptidase, found in Burkholderia ambifaria (strain ATCC BAA-244 / DSM 16087 / CCUG 44356 / LMG 19182 / AMMD) (Burkholderia cepacia (strain AMMD)).